Consider the following 381-residue polypeptide: Cytochrome b (381 aa).

A run of 4 helical transmembrane segments spans residues 34-54, 78-99, 114-134, and 179-199; these read FGSL…FLAM, WLIR…YLHI, WNIG…GYVL, and FFAF…LHFL. The heme b site is built by H84 and H98. 2 residues coordinate heme b: H183 and H197. Residue H202 participates in a ubiquinone binding. Helical transmembrane passes span 227-247, 289-309, 321-341, and 348-368; these read YKDI…VLFL, LGGV…PFLH, LTQL…WIGG, and FIFI…IITP.

The protein belongs to the cytochrome b family. As to quaternary structure, the cytochrome bc1 complex contains 3 respiratory subunits (MT-CYB, CYC1 and UQCRFS1), 2 core proteins (UQCRC1 and UQCRC2) and probably 6 low-molecular weight proteins. The cofactor is heme b.

The protein resides in the mitochondrion inner membrane. In terms of biological role, component of the ubiquinol-cytochrome c reductase complex (complex III or cytochrome b-c1 complex) that is part of the mitochondrial respiratory chain. The b-c1 complex mediates electron transfer from ubiquinol to cytochrome c. Contributes to the generation of a proton gradient across the mitochondrial membrane that is then used for ATP synthesis. The chain is Cytochrome b (mt-cyb) from Heterodontus francisci (Horn shark).